A 351-amino-acid polypeptide reads, in one-letter code: Protein RecA (351 aa).

An ATP-binding site is contributed by 64–71 (GPESSGKT). A disordered region spans residues 330–351 (DRFLQNGGPDPDDGDGDATAEM). The span at 339-351 (DPDDGDGDATAEM) shows a compositional bias: acidic residues.

The protein belongs to the RecA family.

Its subcellular location is the cytoplasm. Functionally, can catalyze the hydrolysis of ATP in the presence of single-stranded DNA, the ATP-dependent uptake of single-stranded DNA by duplex DNA, and the ATP-dependent hybridization of homologous single-stranded DNAs. It interacts with LexA causing its activation and leading to its autocatalytic cleavage. In Rhizobium leguminosarum bv. viciae, this protein is Protein RecA.